Reading from the N-terminus, the 1597-residue chain is Protein STU1 (1597 aa).

Disordered stretches follow at residues 220-265, 519-958, 1005-1154, and 1307-1332; these read GNSS…PSSS, DKVN…RPIH, DAEA…ELNT, and SQRP…SSLV. The span at 535–552 shows a compositional bias: basic and acidic residues; that stretch reads APRESLKEVMRRSRESSV. Residues 577-605 show a composition bias toward low complexity; the sequence is SSGLVGRSLSGSNLTDRSNRLSSTSTSSR. Polar residues-rich tracts occupy residues 610–622 and 632–645; these read AVSD…QMTR and PSLT…SLTR. 2 stretches are compositionally biased toward basic and acidic residues: residues 660–673 and 694–708; these read GSRE…DQNR and ESSR…DPSR. The segment covering 709–726 has biased composition (polar residues); it reads ESSLAPSVHSSTAISRES. Over residues 765–781 the composition is skewed to low complexity; sequence EETMNEVTTAEATATTA. 2 stretches are compositionally biased toward polar residues: residues 791–801 and 808–822; these read PRESTPPNSSP and PATQ…TGKS. Basic and acidic residues predominate over residues 832–846; that stretch reads ELSRDLNGESKHLKE. 3 stretches are compositionally biased toward polar residues: residues 918–933, 1013–1025, and 1036–1045; these read DSQS…QSEP, TEQT…SDTA, and NSEQGPSTEP. Over residues 1081–1091 the composition is skewed to basic and acidic residues; the sequence is ASDEIETDHTK. Over residues 1108–1119 the composition is skewed to acidic residues; the sequence is EPMEICDSDNDA. The segment covering 1122 to 1139 has biased composition (polar residues); sequence NGTNPDTKCQDQQDSTTP. The HEAT repeat unit spans residues 1537–1573; sequence PSYETQLLALITELISDPDPLVRRVTVGLVVRVLRVS.

This sequence belongs to the CLASP family. As to quaternary structure, interacts with microtubules.

The protein localises to the cytoplasm. It is found in the cytoskeleton. Its subcellular location is the nucleus. It localises to the spindle. Its function is as follows. Microtubule binding protein that promotes the stabilization of dynamic microtubules. Required for mitotic spindle formation. The polypeptide is Protein STU1 (STU1) (Yarrowia lipolytica (strain CLIB 122 / E 150) (Yeast)).